A 595-amino-acid chain; its full sequence is METITVFGPKHGSPLSLPSRTNMCWEMKPSRFPLTSVRGKPAKQVGLKVSASCDRPISKLPPSKWTNYFHSVLVDVSEMDVLEREIEALKPNVREMLMSSKGYDSVKKRSLMIYLLVSLGLAYHFEEEIEKSLKDGFEKIDEIIAGEDDLYTISTIFWVFRTYGYNMSSDVFRRFKEENGKFKESLIEDARGMLSLYEAAHLGTTTDYILDEALDFASNNLVSLAEDGMCPSHLSTHIRNALSISQHWNMEIIVAVQYIRFYEQEVGHDEMLLKFAKLNFNLVQRLYLQEVKILTKWYKDQDIHSKLPPYYRPVVTEMHFFSTATFFEPQFSHARILQTKLFMAELLVDDTCDRYATFSEVESLINSLQRWAPDDAMDTHPDYLKVVFKFILNAFEECEKELRPQGRSYSLEQTKEEYKRFAKSNLDLAKLAQAGNVPSFEEYMEVGKDEIGAFVIVAGSLMGMDNIDAVEAYDFLKSRSKFSQSSAEIVRYLNDLAGFEDDMRRGCVSTGLNCYMNQYGVTETEVFREFRKMVMNTCKIMNEEFLKTTDVPLRVLKTNFSCVRSGFVGYNEGEGVTYPEGKITKYLTSLYVDQI.

Mg(2+)-binding residues include Asp-349, Asp-353, Asn-494, and Asp-502. Positions 349–353 (DDTCD) match the DDXXD motif motif.

Belongs to the terpene synthase family. Tpsa subfamily. The cofactor is Mg(2+). It depends on Mn(2+) as a cofactor.

Its subcellular location is the cytoplasm. It functions in the pathway secondary metabolite biosynthesis; terpenoid biosynthesis. In Arabidopsis thaliana (Mouse-ear cress), this protein is Putative terpenoid synthase 16 (TPS16).